The chain runs to 283 residues: Pantothenate synthetase (283 aa).

30–37 contacts ATP; that stretch reads MGNLHDGH. Residue H37 is the Proton donor of the active site. Q61 is a binding site for (R)-pantoate. Q61 contacts beta-alanine. 149–152 contacts ATP; it reads GEKD. Residue Q155 participates in (R)-pantoate binding. Residue 186 to 189 coordinates ATP; sequence LSSR.

This sequence belongs to the pantothenate synthetase family. As to quaternary structure, homodimer.

It is found in the cytoplasm. The catalysed reaction is (R)-pantoate + beta-alanine + ATP = (R)-pantothenate + AMP + diphosphate + H(+). It functions in the pathway cofactor biosynthesis; (R)-pantothenate biosynthesis; (R)-pantothenate from (R)-pantoate and beta-alanine: step 1/1. Its function is as follows. Catalyzes the condensation of pantoate with beta-alanine in an ATP-dependent reaction via a pantoyl-adenylate intermediate. This is Pantothenate synthetase from Escherichia coli O127:H6 (strain E2348/69 / EPEC).